Consider the following 127-residue polypeptide: DNA-directed RNA polymerases I, II, and III subunit RPABC2 (127 aa).

Acidic residues predominate over residues 1–34; it reads MSDNEDNFDGDDFDDVEEDEGLDDLENAEEEGQE. Residues 1–53 are disordered; that stretch reads MSDNEDNFDGDDFDDVEEDEGLDDLENAEEEGQENVEILPSGERPQANQKRIT. N-acetylserine is present on S2. S2 bears the Phosphoserine; by CK2 mark.

This sequence belongs to the archaeal Rpo6/eukaryotic RPB6 RNA polymerase subunit family. As to quaternary structure, component of the RNA polymerase I (Pol I), RNA polymerase II (Pol II) and RNA polymerase III (Pol III) complexes consisting of at least 13, 12 and 17 subunits, respectively. Pol I complex consists of a ten-subunit catalytic core composed of POLR1A/RPA1, POLR1B/RPA2, POLR1C/RPAC1, POLR1D/RPAC2, POLR1H/RPA12, POLR2E/RPABC1, POLR2F/RPABC2, POLR2H/RPABC3, POLR2K/RPABC4 and POLR2L/RPABC5; a mobile stalk subunit POLR1F/RPA43 protruding from the core and additional subunits homologous to general transcription factors POLR1E/RPA49 and POLR1G/RPA34. Part of Pol I pre-initiation complex (PIC), in which Pol I core assembles with RRN3 and promoter-bound UTBF and SL1/TIF-IB complex. Pol II complex contains a ten-subunit catalytic core composed of POLR2A/RPB1, POLR2B/RPB2, POLR2C/RPB3, POLR2I/RPB9, POLR2J/RPB11, POLR2E/RPABC1, POLR2F/RPABC2, POLR2H/RPABC3, POLR2K/RPABC4 and POLR2L/RPABC5 and a mobile stalk composed of two subunits POLR2D/RPB4 and POLR2G/RPB7. Part of Pol II(G) complex, in which Pol II core associates with an additional subunit POLR2M; unlike conventional Pol II, Pol II(G) functions as a transcriptional repressor. Part of TBP-based Pol II pre-initiation complex (PIC), in which Pol II core assembles with general transcription factors and other specific initiation factors including GTF2E1, GTF2E2, GTF2F1, GTF2F2, TCEA1, ERCC2, ERCC3, GTF2H2, GTF2H3, GTF2H4, GTF2H5, GTF2A1, GTF2A2, GTF2B and TBP; this large multi-subunit PIC complex mediates DNA unwinding and targets Pol II core to the transcription start site where the first phosphodiester bond forms. Pol III complex consists of a ten-subunit catalytic core composed of POLR3A/RPC1, POLR3B/RPC2, POLR1C/RPAC1, POLR1D/RPAC2, POLR3K/RPC10, POLR2E/RPABC1, POLR2F/RPABC2, POLR2H/RPABC3, POLR2K/RPABC4 and POLR2L/RPABC5; a mobile stalk composed of two subunits POLR3H/RPC8 and CRCP/RPC9, protruding from the core and functioning primarily in transcription initiation; and additional subunits homologous to general transcription factors of the RNA polymerase II machinery, POLR3C/RPC3-POLR3F/RPC6-POLR3G/RPC7 heterotrimer required for transcription initiation and POLR3D/RPC4-POLR3E/RPC5 heterodimer involved in both transcription initiation and termination.

The protein resides in the nucleus. Its subcellular location is the nucleolus. In terms of biological role, DNA-dependent RNA polymerase catalyzes the transcription of DNA into RNA using the four ribonucleoside triphosphates as substrates. Common component of RNA polymerases I, II, and III which synthesize ribosomal RNA precursors, mRNA precursors and many functional non-coding RNAs, and small RNAs, such as 5S rRNA and tRNAs, respectively. Pol II is the central component of the basal RNA polymerase II transcription machinery. Pols are composed of mobile elements that move relative to each other. In Pol II, POLR2F/RPABC2 is part of the clamp element and together with parts of POLR2A/RPB1 and POLR2B/RPB2 forms a pocket to which the POLR2D/RPB4-POLR2G/RPB7 subcomplex binds. The chain is DNA-directed RNA polymerases I, II, and III subunit RPABC2 from Mus musculus (Mouse).